The primary structure comprises 266 residues: Undecaprenyl-diphosphatase (266 aa).

Helical transmembrane passes span 1 to 21, 39 to 59, 83 to 103, 111 to 131, 144 to 164, 183 to 203, 218 to 238, and 246 to 266; these read MDTF…FLPI, QGLA…VLYF, SKLA…GFAL, LRGP…LWWA, TGWK…IPGT, AAAR…AILM, SLAL…HLFL, and MTPF…FIFM.

It belongs to the UppP family.

The protein localises to the cell inner membrane. The enzyme catalyses di-trans,octa-cis-undecaprenyl diphosphate + H2O = di-trans,octa-cis-undecaprenyl phosphate + phosphate + H(+). Its function is as follows. Catalyzes the dephosphorylation of undecaprenyl diphosphate (UPP). Confers resistance to bacitracin. The chain is Undecaprenyl-diphosphatase from Shewanella woodyi (strain ATCC 51908 / MS32).